The chain runs to 699 residues: Ribosomal RNA large subunit methyltransferase K/L (699 aa).

In terms of domain architecture, THUMP spans 44 to 155 (DAYKLCLWSR…RDNVILGIDL (112 aa)).

It belongs to the methyltransferase superfamily. RlmKL family.

Its subcellular location is the cytoplasm. The catalysed reaction is guanosine(2445) in 23S rRNA + S-adenosyl-L-methionine = N(2)-methylguanosine(2445) in 23S rRNA + S-adenosyl-L-homocysteine + H(+). It carries out the reaction guanosine(2069) in 23S rRNA + S-adenosyl-L-methionine = N(2)-methylguanosine(2069) in 23S rRNA + S-adenosyl-L-homocysteine + H(+). Functionally, specifically methylates the guanine in position 2445 (m2G2445) and the guanine in position 2069 (m7G2069) of 23S rRNA. This Alteromonas mediterranea (strain DSM 17117 / CIP 110805 / LMG 28347 / Deep ecotype) protein is Ribosomal RNA large subunit methyltransferase K/L.